The chain runs to 496 residues: Cytochrome P450 71AV8 (496 aa).

Residues 3–23 (ISIPTTLGLAVIIFIIFKLLT) traverse the membrane as a helical segment. Cys-432 contacts heme.

The protein belongs to the cytochrome P450 family. Heme is required as a cofactor.

It is found in the membrane. Functionally, valencene oxidase, which preferentially hydroylates the C2 position of (+)-valencene in the trans-orientation, producing trans-nootkatol that can be further oxidized to (+)-nootkatone. Can also catalyze the three-step conversion of germacrene A to germacra-1(10),4,11(13)-trien-12-oic acid and the partial conversion of the non-natural substrate amorpha-4,11-diene into artemisinic alcohol and artemisinic aldehyde. The polypeptide is Cytochrome P450 71AV8 (CYP71AV8) (Cichorium intybus (Chicory)).